Here is a 370-residue protein sequence, read N- to C-terminus: Uroporphyrinogen decarboxylase (370 aa).

Substrate-binding positions include 29–33, Asp79, Tyr155, Ser210, and His342; that span reads RQAGR.

It belongs to the uroporphyrinogen decarboxylase family. In terms of assembly, homodimer.

The protein resides in the cytoplasm. The catalysed reaction is uroporphyrinogen III + 4 H(+) = coproporphyrinogen III + 4 CO2. It functions in the pathway porphyrin-containing compound metabolism; protoporphyrin-IX biosynthesis; coproporphyrinogen-III from 5-aminolevulinate: step 4/4. Catalyzes the decarboxylation of four acetate groups of uroporphyrinogen-III to yield coproporphyrinogen-III. The polypeptide is Uroporphyrinogen decarboxylase (Acidovorax sp. (strain JS42)).